The primary structure comprises 521 residues: MMNNIHLNKILILDFGSQYTQLIARRVREIGVYCELSHYDINSDFIKKFNPKGVILSGGPDTVTFDNSARAPSIIFDLNIPILGICYGMQTMAIQLGGHATSADKHEYGFAKVRSCNYSPLLNGINDGGDDLLDVWMSHGIEVKRLPDGFKLIASTDSCNIAGFADINKHYYGLQFHPEVTHTKQGKHILERFVSDICQCKKNWTTDNIITKLVKDLKNQIGSANVLLGLSGGVDSSVVAILLQQAVGKQLTCVFVDNGLLRLNEGNKIMQTFAQNMSVKVIRVNAQEKFYNALSNEDKPEAKRKIIGHAFIEVFEEEARKLNNIQFLAQGTIYPDVIESAGTKSNKTKVIKSHHNVGGLPNSLQLTLVEPIKELFKDEVRKIGVILGLPTHMLNCHPFPGPGLSIRILGQVKQEYVDILRQADTIFIDELYKNNLYNTVNQAFAVFLPIKSVGVTGDARRYDYVISLRAVETIDFMTARWARLPYDFLDLVSNRIMNEIPRISRVVYDISSKPPATIEWE.

The 195-residue stretch at 9 to 203 (KILILDFGSQ…VSDICQCKKN (195 aa)) folds into the Glutamine amidotransferase type-1 domain. The active-site Nucleophile is cysteine 86. Active-site residues include histidine 177 and glutamate 179. The GMPS ATP-PPase domain occupies 204–396 (WTTDNIITKL…LGLPTHMLNC (193 aa)). 231–237 (SGGVDSS) lines the ATP pocket.

As to quaternary structure, homodimer.

It catalyses the reaction XMP + L-glutamine + ATP + H2O = GMP + L-glutamate + AMP + diphosphate + 2 H(+). Its pathway is purine metabolism; GMP biosynthesis; GMP from XMP (L-Gln route): step 1/1. In terms of biological role, catalyzes the synthesis of GMP from XMP. The chain is GMP synthase [glutamine-hydrolyzing] from Vesicomyosocius okutanii subsp. Calyptogena okutanii (strain HA).